The sequence spans 146 residues: Nucleoside diphosphate kinase (146 aa).

Residues K11, F59, R87, T93, R104, and N114 each contribute to the ATP site. H117 (pros-phosphohistidine intermediate) is an active-site residue.

Belongs to the NDK family. Homotetramer. Mg(2+) is required as a cofactor.

Its subcellular location is the cytoplasm. The enzyme catalyses a 2'-deoxyribonucleoside 5'-diphosphate + ATP = a 2'-deoxyribonucleoside 5'-triphosphate + ADP. The catalysed reaction is a ribonucleoside 5'-diphosphate + ATP = a ribonucleoside 5'-triphosphate + ADP. Its function is as follows. Major role in the synthesis of nucleoside triphosphates other than ATP. The ATP gamma phosphate is transferred to the NDP beta phosphate via a ping-pong mechanism, using a phosphorylated active-site intermediate. The polypeptide is Nucleoside diphosphate kinase (Anaeromyxobacter sp. (strain Fw109-5)).